The chain runs to 154 residues: Interleukin-7 (154 aa).

The signal sequence occupies residues 1-25; sequence MFHVSFRYIFGIPPLILVLLPVTSS. Intrachain disulfides connect cysteine 27/cysteine 145, cysteine 58/cysteine 133, and cysteine 71/cysteine 116. N-linked (GlcNAc...) asparagine glycosylation is found at asparagine 94 and asparagine 115.

This sequence belongs to the IL-7/IL-9 family. As to quaternary structure, interacts with IL7R and CSF2RG. In terms of processing, three disulfide bonds are present.

The protein resides in the secreted. Hematopoietic cytokine that plays an essential role in the development, expansion, and survival of naive and memory T-cells and B-cells thereby regulating the number of mature lymphocytes and maintaining lymphoid homeostasis. Mechanistically, exerts its biological effects through a receptor composed of IL7RA subunit and the cytokine receptor common subunit gamma/CSF2RG. Binding to the receptor leads to activation of various kinases including JAK1 or JAK3 depending on the cell type and subsequently propagation of signals through activation of several downstream signaling pathways including the PI3K/Akt/mTOR or the JAK-STAT5. In Mus musculus (Mouse), this protein is Interleukin-7 (Il7).